The following is a 285-amino-acid chain: Polyamine aminopropyltransferase (285 aa).

Residues 5–241 (DSWFTEHFQA…GWWSVTLSSK (237 aa)) enclose the PABS domain. S-methyl-5'-thioadenosine is bound at residue Q35. Spermidine contacts are provided by H66 and D90. Residues D110 and 141 to 142 (DG) contribute to the S-methyl-5'-thioadenosine site. Catalysis depends on D160, which acts as the Proton acceptor. 160–163 (DSTD) lines the spermidine pocket. S-methyl-5'-thioadenosine is bound at residue P167.

It belongs to the spermidine/spermine synthase family. As to quaternary structure, homodimer or homotetramer.

The protein localises to the cytoplasm. It carries out the reaction S-adenosyl 3-(methylsulfanyl)propylamine + putrescine = S-methyl-5'-thioadenosine + spermidine + H(+). The protein operates within amine and polyamine biosynthesis; spermidine biosynthesis; spermidine from putrescine: step 1/1. In terms of biological role, catalyzes the irreversible transfer of a propylamine group from the amino donor S-adenosylmethioninamine (decarboxy-AdoMet) to putrescine (1,4-diaminobutane) to yield spermidine. In Xylella fastidiosa (strain 9a5c), this protein is Polyamine aminopropyltransferase.